Consider the following 323-residue polypeptide: Glutamyl-Q tRNA(Asp) synthetase (323 aa).

Residues 5 to 9 (RFAPT) and E41 contribute to the L-glutamate site. Positions 8 to 18 (PTPSGALHLGN) match the 'HIGH' region motif. Zn(2+) is bound by residues C105, C107, Y129, and C133. Y193 and R211 together coordinate L-glutamate. Residues 249–253 (RLAKR) carry the 'KMSKS' region motif. K252 is an ATP binding site.

This sequence belongs to the class-I aminoacyl-tRNA synthetase family. GluQ subfamily. It depends on Zn(2+) as a cofactor.

Its function is as follows. Catalyzes the tRNA-independent activation of glutamate in presence of ATP and the subsequent transfer of glutamate onto a tRNA(Asp). Glutamate is transferred on the 2-amino-5-(4,5-dihydroxy-2-cyclopenten-1-yl) moiety of the queuosine in the wobble position of the QUC anticodon. This Symbiobacterium thermophilum (strain DSM 24528 / JCM 14929 / IAM 14863 / T) protein is Glutamyl-Q tRNA(Asp) synthetase.